Here is a 665-residue protein sequence, read N- to C-terminus: non-specific serine/threonine protein kinase (665 aa).

A Protein kinase domain is found at 145-597; it reads FDVHCRIGSG…AEEALKHPFF (453 aa). ATP-binding positions include 151–159 and Lys-181; that span reads IGSGTFSTV. The active-site Proton acceptor is the Asp-268.

This sequence belongs to the protein kinase superfamily. Ser/Thr protein kinase family. Interacts with chif (via N-terminus).

The enzyme catalyses L-seryl-[protein] + ATP = O-phospho-L-seryl-[protein] + ADP + H(+). The catalysed reaction is L-threonyl-[protein] + ATP = O-phospho-L-threonyl-[protein] + ADP + H(+). Functionally, probable serine/threonine protein kinase that forms a complex with the N-terminal peptide of the chiffon protein and may be involved in regulating meiotic processes in the male testis. The protein is non-specific serine/threonine protein kinase of Drosophila melanogaster (Fruit fly).